The sequence spans 506 residues: Galactose/methyl galactoside import ATP-binding protein MglA (506 aa).

2 consecutive ABC transporter domains span residues 14–249 and 264–506; these read LEMS…VGRS and VILE…SLHL. Residue 46-53 participates in ATP binding; the sequence is GENGAGKS.

The protein belongs to the ABC transporter superfamily. Galactose/methyl galactoside importer (TC 3.A.1.2.3) family. In terms of assembly, the complex is composed of one ATP-binding protein (MglA), two transmembrane proteins (MglC) and a solute-binding protein (MglB).

The protein localises to the cell inner membrane. The catalysed reaction is D-galactose(out) + ATP + H2O = D-galactose(in) + ADP + phosphate + H(+). The enzyme catalyses methyl beta-D-galactoside(out) + ATP + H2O = methyl beta-D-galactoside(in) + ADP + phosphate + H(+). Part of the ABC transporter complex MglABC involved in galactose/methyl galactoside import. Responsible for energy coupling to the transport system. In Escherichia coli O157:H7, this protein is Galactose/methyl galactoside import ATP-binding protein MglA.